The chain runs to 293 residues: MFVHAHPDDEVISTGIALASYAAAPDTSVTLVTCTLGEEGEVLVPELINLRADRGDQLGGYRIGELAGSCAALGITDQRFLGGPGRWRDSGMIGTPANDHPRSLWRADLAEATAELVRIVRDVRPHVLVSYDSNGGYGHPDHIRAHQVTARAFTDAADPAFAPGTGEPWQVAKRYETAMPRSRAVAGFELFHDSADRNNPFAGLKSVDDLAMTLVDDADITAEISAPEFFDAKIAAMRAHRTQMAVDGFFFALADGIGQRAWGVEHFVLAAGTRGPGDGPDGRERDLLAGVAF.

The Zn(2+) site is built by His6, Asp9, and His142.

It belongs to the MshB deacetylase family. Zn(2+) is required as a cofactor.

It carries out the reaction 1D-myo-inositol 2-acetamido-2-deoxy-alpha-D-glucopyranoside + H2O = 1D-myo-inositol 2-amino-2-deoxy-alpha-D-glucopyranoside + acetate. Its function is as follows. Catalyzes the deacetylation of 1D-myo-inositol 2-acetamido-2-deoxy-alpha-D-glucopyranoside (GlcNAc-Ins) in the mycothiol biosynthesis pathway. The protein is 1D-myo-inositol 2-acetamido-2-deoxy-alpha-D-glucopyranoside deacetylase 2 of Frankia alni (strain DSM 45986 / CECT 9034 / ACN14a).